Consider the following 704-residue polypeptide: Elongation factor G (704 aa).

Residues 8–291 (DRVRNIGIMA…AVIDYLASPV (284 aa)) enclose the tr-type G domain. GTP is bound by residues 17 to 24 (AHIDAGKT), 90 to 94 (DTPGH), and 144 to 147 (NKMD).

Belongs to the TRAFAC class translation factor GTPase superfamily. Classic translation factor GTPase family. EF-G/EF-2 subfamily.

The protein localises to the cytoplasm. Catalyzes the GTP-dependent ribosomal translocation step during translation elongation. During this step, the ribosome changes from the pre-translocational (PRE) to the post-translocational (POST) state as the newly formed A-site-bound peptidyl-tRNA and P-site-bound deacylated tRNA move to the P and E sites, respectively. Catalyzes the coordinated movement of the two tRNA molecules, the mRNA and conformational changes in the ribosome. This chain is Elongation factor G, found in Chlorobaculum tepidum (strain ATCC 49652 / DSM 12025 / NBRC 103806 / TLS) (Chlorobium tepidum).